The sequence spans 150 residues: MEDRLYEGIAQQAGIAGCTLVDARMVRTGRAVALQVFIEKDETTAVTIEDCAAVSRQLSLWLDVENPIHGAYRLEVSSPGLDRPLKNLHDFERFKGSQAEIHLHGLTQGRRRLQGELLGVEDQKIVLKNAEGRWTFALDDIHKARLVPQW.

The protein belongs to the RimP family.

Its subcellular location is the cytoplasm. In terms of biological role, required for maturation of 30S ribosomal subunits. The polypeptide is Ribosome maturation factor RimP (Acidithiobacillus ferrooxidans (strain ATCC 23270 / DSM 14882 / CIP 104768 / NCIMB 8455) (Ferrobacillus ferrooxidans (strain ATCC 23270))).